Here is a 376-residue protein sequence, read N- to C-terminus: Flagellin B (376 aa).

A coiled-coil region spans residues 103 to 129; the sequence is SNSSSERRAIQEEVSALNDELNRIAET.

It belongs to the bacterial flagellin family. In terms of assembly, heteromer of multiple flagellin subunits including FlaA, FlaB, FlaC, FlaD and FlaE.

Its subcellular location is the secreted. It is found in the bacterial flagellum. Its function is as follows. Flagellin is the subunit protein which polymerizes to form the filaments of bacterial flagella. FlaB is not essential for flagellar synthesis and motility. The protein is Flagellin B (flaB) of Vibrio cholerae serotype O1 (strain ATCC 39541 / Classical Ogawa 395 / O395).